A 398-amino-acid polypeptide reads, in one-letter code: NADH-quinone oxidoreductase subunit D (398 aa).

It belongs to the complex I 49 kDa subunit family. As to quaternary structure, NDH-1 is composed of 14 different subunits. Subunits NuoB, C, D, E, F, and G constitute the peripheral sector of the complex.

The protein resides in the cell inner membrane. It catalyses the reaction a quinone + NADH + 5 H(+)(in) = a quinol + NAD(+) + 4 H(+)(out). NDH-1 shuttles electrons from NADH, via FMN and iron-sulfur (Fe-S) centers, to quinones in the respiratory chain. The immediate electron acceptor for the enzyme in this species is believed to be ubiquinone. Couples the redox reaction to proton translocation (for every two electrons transferred, four hydrogen ions are translocated across the cytoplasmic membrane), and thus conserves the redox energy in a proton gradient. This is NADH-quinone oxidoreductase subunit D from Bradyrhizobium sp. (strain BTAi1 / ATCC BAA-1182).